Reading from the N-terminus, the 168-residue chain is GPI-anchored protein LLG1 (168 aa).

Positions 1–23 (MELLSRALFFFLLLSVLSSFSSS) are cleaved as a signal peptide. Residue asparagine 57 is glycosylated (N-linked (GlcNAc...) asparagine). The GPI-anchor amidated asparagine moiety is linked to residue asparagine 144. The propeptide at 145–168 (AATTSSSRLWLTVSAALLVFVKLF) is removed in mature form.

Interacts with FER. Expressed in pollen, pollen tubes, sporophytic pistil tissues, in the early stages of female gametophyte development, and in unfertilized, mature ovules. Expressed in roots, lateral roots, shoots, cotyledons, petioles, developing leaves and anther filaments.

It localises to the cell membrane. Functionally, component of the FER-regulated Rho GTPase signaling complex. Acts as a chaperone and coreceptor for FER. Required for localization of FER to the plasma membrane. The sequence is that of GPI-anchored protein LLG1 from Arabidopsis thaliana (Mouse-ear cress).